Here is a 190-residue protein sequence, read N- to C-terminus: Xanthine phosphoribosyltransferase (190 aa).

Xanthine contacts are provided by L20 and N27. 129–133 (ANGAA) provides a ligand contact to 5-phospho-alpha-D-ribose 1-diphosphate. Position 157 (K157) interacts with xanthine.

It belongs to the purine/pyrimidine phosphoribosyltransferase family. Xpt subfamily. Homodimer.

The protein resides in the cytoplasm. The catalysed reaction is XMP + diphosphate = xanthine + 5-phospho-alpha-D-ribose 1-diphosphate. Its pathway is purine metabolism; XMP biosynthesis via salvage pathway; XMP from xanthine: step 1/1. Converts the preformed base xanthine, a product of nucleic acid breakdown, to xanthosine 5'-monophosphate (XMP), so it can be reused for RNA or DNA synthesis. This Laribacter hongkongensis (strain HLHK9) protein is Xanthine phosphoribosyltransferase.